The sequence spans 164 residues: Disulfide bond formation protein B (164 aa).

Over 1 to 4 the chain is Cytoplasmic; sequence MRII. The helical transmembrane segment at 5-21 threads the bilayer; it reads FLLIALICAGLVSYALY. Residues 22 to 39 are Periplasmic-facing; that stretch reads LQLADGLLPCPLCIFQRM. A disulfide bridge links C31 with C34. A helical transmembrane segment spans residues 40–56; sequence AYWLVGITALFAFIHHP. The Cytoplasmic portion of the chain corresponds to 57–62; the sequence is QRLGRR. Residues 63 to 80 form a helical membrane-spanning segment; sequence IYCGLIILFSLAGAIVAG. The Periplasmic portion of the chain corresponds to 81 to 136; sequence RQAWLVRFPEAFECGISPEEAFLNELPLARWWPDMFEANGDCTDGTWQFLSLTIPD. C94 and C122 are oxidised to a cystine. Residues 137-155 form a helical membrane-spanning segment; the sequence is WSLLIFLAFSLIAGLLWRS. Topologically, residues 156 to 164 are cytoplasmic; the sequence is RSISSSNLK.

It belongs to the DsbB family.

It is found in the cell inner membrane. Required for disulfide bond formation in some periplasmic proteins. Acts by oxidizing the DsbA protein. The protein is Disulfide bond formation protein B of Nitrosomonas europaea (strain ATCC 19718 / CIP 103999 / KCTC 2705 / NBRC 14298).